The primary structure comprises 76 residues: uncharacterized protein (76 aa).

Residues 1–24 (MPLRLCQGRKDRASDPVRDDGSPP) are disordered. Residues 8–22 (GRKDRASDPVRDDGS) are compositionally biased toward basic and acidic residues.

This is an uncharacterized protein from Dryophytes versicolor (chameleon treefrog).